The primary structure comprises 182 residues: Probable RNA 2'-phosphotransferase (182 aa).

Belongs to the KptA/TPT1 family.

Removes the 2'-phosphate from RNA via an intermediate in which the phosphate is ADP-ribosylated by NAD followed by a presumed transesterification to release the RNA and generate ADP-ribose 1''-2''-cyclic phosphate (APPR&gt;P). May function as an ADP-ribosylase. The protein is Probable RNA 2'-phosphotransferase of Flavobacterium johnsoniae (strain ATCC 17061 / DSM 2064 / JCM 8514 / BCRC 14874 / CCUG 350202 / NBRC 14942 / NCIMB 11054 / UW101) (Cytophaga johnsonae).